We begin with the raw amino-acid sequence, 245 residues long: 1-(5-phosphoribosyl)-5-[(5-phosphoribosylamino)methylideneamino] imidazole-4-carboxamide isomerase (245 aa).

D8 serves as the catalytic Proton acceptor. The Proton donor role is filled by D130.

This sequence belongs to the HisA/HisF family.

It localises to the cytoplasm. It carries out the reaction 1-(5-phospho-beta-D-ribosyl)-5-[(5-phospho-beta-D-ribosylamino)methylideneamino]imidazole-4-carboxamide = 5-[(5-phospho-1-deoxy-D-ribulos-1-ylimino)methylamino]-1-(5-phospho-beta-D-ribosyl)imidazole-4-carboxamide. It participates in amino-acid biosynthesis; L-histidine biosynthesis; L-histidine from 5-phospho-alpha-D-ribose 1-diphosphate: step 4/9. The protein is 1-(5-phosphoribosyl)-5-[(5-phosphoribosylamino)methylideneamino] imidazole-4-carboxamide isomerase of Pseudomonas savastanoi pv. phaseolicola (strain 1448A / Race 6) (Pseudomonas syringae pv. phaseolicola (strain 1448A / Race 6)).